The primary structure comprises 177 residues: ATP-dependent protease subunit HslV (177 aa).

The active site involves Thr-7. Gly-162, Cys-165, and Thr-168 together coordinate Na(+).

Belongs to the peptidase T1B family. HslV subfamily. A double ring-shaped homohexamer of HslV is capped on each side by a ring-shaped HslU homohexamer. The assembly of the HslU/HslV complex is dependent on binding of ATP.

The protein resides in the cytoplasm. The enzyme catalyses ATP-dependent cleavage of peptide bonds with broad specificity.. Allosterically activated by HslU binding. Its function is as follows. Protease subunit of a proteasome-like degradation complex believed to be a general protein degrading machinery. The polypeptide is ATP-dependent protease subunit HslV (Persephonella marina (strain DSM 14350 / EX-H1)).